The sequence spans 680 residues: Serine/threonine-protein kinase YPK1 (680 aa).

The segment covering 1–11 (MYSWKSKFKFG) has biased composition (basic residues). Positions 1-117 (MYSWKSKFKF…GTPNDATSSS (117 aa)) are disordered. Composition is skewed to basic and acidic residues over residues 12–21 (KSKEEKEAKH) and 41–56 (GEHDASITRSSLDRKG). Residue threonine 57 is modified to Phosphothreonine. The segment covering 59 to 71 (NPSNSSVVPVRVS) has biased composition (low complexity). Residues serine 61, serine 64, and serine 71 each carry the phosphoserine modification. The span at 73 to 83 (DASSSTSTVRD) shows a compositional bias: polar residues. Low complexity predominate over residues 84 to 97 (SNGGNSENTNSSQN). Over residues 98–117 (LDETANIGSTGTPNDATSSS) the composition is skewed to polar residues. Serine 170 bears the Phosphoserine mark. Residues 347–602 (FDLLKVIGKG…ADEIRNHPFF (256 aa)) enclose the Protein kinase domain. Residues 353–361 (IGKGSFGKV) and lysine 376 contribute to the ATP site. Residue aspartate 470 is the Proton acceptor of the active site. Threonine 502 bears the Phosphothreonine mark. Threonine 504 bears the Phosphothreonine; by PKH1 mark. The 71-residue stretch at 603–673 (SQLSWKRLLM…VGNEQLGSSM (71 aa)) folds into the AGC-kinase C-terminal domain. Residues serine 644 and serine 653 each carry the phosphoserine modification. A Phosphothreonine; by PKH1 modification is found at threonine 662. Serine 671 is modified (phosphoserine).

The protein belongs to the protein kinase superfamily. AGC Ser/Thr protein kinase family. RAC subfamily. In terms of processing, autophosphorylated. Phytosphingosine level stimulates phosphorylation by PKH1. The N-terminal half is phosphorylated by FPK1. Phosphorylation is inhibited by exogenous addition of phytosphingosine.

It is found in the cytoplasm. It localises to the cell membrane. It catalyses the reaction L-seryl-[protein] + ATP = O-phospho-L-seryl-[protein] + ADP + H(+). It carries out the reaction L-threonyl-[protein] + ATP = O-phospho-L-threonyl-[protein] + ADP + H(+). Activated by phytosphingosine (PHS), a sphingoid long chain base. Activated by PKH1 phosphorylation. Its function is as follows. Plays an essential role in the proliferation of yeast cells. Involved in a signaling pathway, required for optimal cell wall integrity, that acts in parallel with the PKC1-SLT2-dependent pathway. Downstream kinase in the sphingolipid-mediated signaling pathway. Phosphorylation is regulated by the intracellular sphingolipid concentration. Disruption or inhibition of sphingolipid synthesis leads to the activation and phosphorylation of YPK1 through the TORC2 and PKH1 pathways, which in turn phosphorylates ORM1 and LAG1 to activate sphingolipid synthesis. Cooperates with SLI1 in mediating resistance to the sphingolipid biosynthesis inhibitor drug myriocin (ISP-1); kinase activity is essential for the resistance. Required for both receptor-mediated and fluid-phase endocytosis, but is not necessary for receptor phosphorylation or ubiquitination. Necessary for the internalization of plasma membrane proteins carrying different types of internalization signals. Acts downstream of the PKH kinases to control endocytosis by phosphorylating components of the endocytic machinery. Phosphorylation of residue Thr-504 in the activation loop and residue Thr-662 are essential for activity. Phosphorylates and down-regulates flippase activator FPK1. This chain is Serine/threonine-protein kinase YPK1 (YPK1), found in Saccharomyces cerevisiae (strain ATCC 204508 / S288c) (Baker's yeast).